Reading from the N-terminus, the 242-residue chain is Probable 2-phosphosulfolactate phosphatase (242 aa).

This sequence belongs to the ComB family. It depends on Mg(2+) as a cofactor.

It carries out the reaction (2R)-O-phospho-3-sulfolactate + H2O = (2R)-3-sulfolactate + phosphate. In Parasynechococcus marenigrum (strain WH8102), this protein is Probable 2-phosphosulfolactate phosphatase.